The chain runs to 69 residues: Large ribosomal subunit protein eL38 (69 aa).

Belongs to the eukaryotic ribosomal protein eL38 family.

This is Large ribosomal subunit protein eL38 (RPL38) from Solanum lycopersicum (Tomato).